The following is a 510-amino-acid chain: NAD(P)H-quinone oxidoreductase subunit 2 A, chloroplastic (510 aa).

A run of 13 helical transmembrane segments spans residues 24–44 (LLLFHGSFIFPECILIFGLIL), 57–77 (IPWLYFISSTSLVMSITALLF), 99–119 (IFQFLILLCSTLCIPLSVEYI), 124–144 (MAITEFLLFVLTATLGGMFLC), 149–169 (LITIFVAPECFSLCSYLLSGY), 183–203 (YLLMGGASSSILVHGFSWLYG), 229–249 (ISIALIFITVGIGFKLSPAPF), 295–315 (WHLLLEILAILSMILGNLIAI), 323–343 (MLAYSSIGQIGYVIIGIIVGD), 354–374 (YMLFYISMNLGTFACIVLFGL), 395–415 (ALSSALCLLSLGGLPPLAGFF), 418–438 (LYLFWCGWQAGLYFLVSIGLL), and 484–504 (MILCVIASTIPGISMNPIIAI).

It belongs to the complex I subunit 2 family. As to quaternary structure, NDH is composed of at least 16 different subunits, 5 of which are encoded in the nucleus.

The protein resides in the plastid. Its subcellular location is the chloroplast thylakoid membrane. It catalyses the reaction a plastoquinone + NADH + (n+1) H(+)(in) = a plastoquinol + NAD(+) + n H(+)(out). The enzyme catalyses a plastoquinone + NADPH + (n+1) H(+)(in) = a plastoquinol + NADP(+) + n H(+)(out). Functionally, NDH shuttles electrons from NAD(P)H:plastoquinone, via FMN and iron-sulfur (Fe-S) centers, to quinones in the photosynthetic chain and possibly in a chloroplast respiratory chain. The immediate electron acceptor for the enzyme in this species is believed to be plastoquinone. Couples the redox reaction to proton translocation, and thus conserves the redox energy in a proton gradient. This Piper cenocladum (Ant piper) protein is NAD(P)H-quinone oxidoreductase subunit 2 A, chloroplastic.